Consider the following 458-residue polypeptide: Histidine--tRNA ligase (458 aa).

It belongs to the class-II aminoacyl-tRNA synthetase family. Homodimer.

The protein resides in the cytoplasm. It carries out the reaction tRNA(His) + L-histidine + ATP = L-histidyl-tRNA(His) + AMP + diphosphate + H(+). The chain is Histidine--tRNA ligase from Azobacteroides pseudotrichonymphae genomovar. CFP2.